The primary structure comprises 586 residues: Clathrin heavy chain linker domain-containing protein 1 (586 aa).

Residues 174-232 (MNLDALTKYMKHLEDKYAEIKQAMLIKYVPAQRKSDLDEEMIVLLKRRDVAENLNRKLQ) are a coiled coil.

The sequence is that of Clathrin heavy chain linker domain-containing protein 1 (CLHC1) from Macaca fascicularis (Crab-eating macaque).